The chain runs to 488 residues: ATP synthase subunit beta (488 aa).

164–171 contacts ATP; that stretch reads GGAGVGKT.

The protein belongs to the ATPase alpha/beta chains family. F-type ATPases have 2 components, CF(1) - the catalytic core - and CF(0) - the membrane proton channel. CF(1) has five subunits: alpha(3), beta(3), gamma(1), delta(1), epsilon(1). CF(0) has four main subunits: a(1), b(1), b'(1) and c(9-12).

It localises to the cellular thylakoid membrane. The enzyme catalyses ATP + H2O + 4 H(+)(in) = ADP + phosphate + 5 H(+)(out). Produces ATP from ADP in the presence of a proton gradient across the membrane. The catalytic sites are hosted primarily by the beta subunits. The protein is ATP synthase subunit beta of Prochlorococcus marinus (strain MIT 9313).